Here is a 348-residue protein sequence, read N- to C-terminus: Phenylalanine--tRNA ligase alpha subunit (348 aa).

Glutamate 269 is a Mg(2+) binding site.

This sequence belongs to the class-II aminoacyl-tRNA synthetase family. Phe-tRNA synthetase alpha subunit type 1 subfamily. As to quaternary structure, tetramer of two alpha and two beta subunits. It depends on Mg(2+) as a cofactor.

Its subcellular location is the cytoplasm. The enzyme catalyses tRNA(Phe) + L-phenylalanine + ATP = L-phenylalanyl-tRNA(Phe) + AMP + diphosphate + H(+). This is Phenylalanine--tRNA ligase alpha subunit from Dechloromonas aromatica (strain RCB).